Here is a 98-residue protein sequence, read N- to C-terminus: NADH-quinone oxidoreductase subunit K (98 aa).

A run of 3 helical transmembrane segments spans residues 1–21, 27–47, and 59–79; these read MGHL…GIFL, IVLL…FIAF, and FVFF…AILV.

It belongs to the complex I subunit 4L family. In terms of assembly, NDH-1 is composed of 14 different subunits. Subunits NuoA, H, J, K, L, M, N constitute the membrane sector of the complex.

Its subcellular location is the cell inner membrane. The enzyme catalyses a quinone + NADH + 5 H(+)(in) = a quinol + NAD(+) + 4 H(+)(out). Its function is as follows. NDH-1 shuttles electrons from NADH, via FMN and iron-sulfur (Fe-S) centers, to quinones in the respiratory chain. The immediate electron acceptor for the enzyme in this species is believed to be ubiquinone. Couples the redox reaction to proton translocation (for every two electrons transferred, four hydrogen ions are translocated across the cytoplasmic membrane), and thus conserves the redox energy in a proton gradient. In Xanthomonas oryzae pv. oryzae (strain PXO99A), this protein is NADH-quinone oxidoreductase subunit K.